Here is an 85-residue protein sequence, read N- to C-terminus: UPF0291 protein SPCG_1462 (85 aa).

Positions 62–85 are disordered; sequence TPEKLRQVQREKGLHGRSLDDPNS.

This sequence belongs to the UPF0291 family.

It localises to the cytoplasm. In Streptococcus pneumoniae (strain CGSP14), this protein is UPF0291 protein SPCG_1462.